The following is a 92-amino-acid chain: UPF0213 protein H16_B0156 (92 aa).

Positions 5-80 constitute a GIY-YIG domain; it reads SAWYLYLLEC…KRLSSTQKRA (76 aa).

The protein belongs to the UPF0213 family.

In Cupriavidus necator (strain ATCC 17699 / DSM 428 / KCTC 22496 / NCIMB 10442 / H16 / Stanier 337) (Ralstonia eutropha), this protein is UPF0213 protein H16_B0156.